A 247-amino-acid polypeptide reads, in one-letter code: tRNA pseudouridine synthase A (247 aa).

The active-site Nucleophile is aspartate 53. Tyrosine 111 contributes to the substrate binding site.

Belongs to the tRNA pseudouridine synthase TruA family. Homodimer.

The enzyme catalyses uridine(38/39/40) in tRNA = pseudouridine(38/39/40) in tRNA. Functionally, formation of pseudouridine at positions 38, 39 and 40 in the anticodon stem and loop of transfer RNAs. The chain is tRNA pseudouridine synthase A from Bacillus licheniformis (strain ATCC 14580 / DSM 13 / JCM 2505 / CCUG 7422 / NBRC 12200 / NCIMB 9375 / NCTC 10341 / NRRL NRS-1264 / Gibson 46).